The chain runs to 92 residues: C-C motif chemokine 4 (92 aa).

A signal peptide spans 1 to 23 (MKLCVTVLSLLVLMAAFCSPALS). Disulfide bonds link Cys34–Cys58 and Cys35–Cys74.

It belongs to the intercrine beta (chemokine CC) family. In terms of assembly, homodimer. Interacts with CCR5.

It localises to the secreted. Its function is as follows. Monokine with inflammatory and chemokinetic properties. This chain is C-C motif chemokine 4 (CCL4), found in Bos taurus (Bovine).